A 265-amino-acid chain; its full sequence is Mlc titration factor A (265 aa).

Zn(2+) is bound by residues histidine 111, histidine 148, histidine 152, and glutamate 211.

The protein belongs to the MtfA family. In terms of assembly, interacts with Mlc. It depends on Zn(2+) as a cofactor.

The protein localises to the cytoplasm. Functionally, involved in the modulation of the activity of the glucose-phosphotransferase system (glucose-PTS). Interacts with the transcriptional repressor Mlc, preventing its interaction with DNA and leading to the modulation of expression of genes regulated by Mlc, including ptsG, which encodes the PTS system glucose-specific EIICB component. Its function is as follows. Shows zinc-dependent metallopeptidase activity. This is Mlc titration factor A from Escherichia coli O7:K1 (strain IAI39 / ExPEC).